The chain runs to 364 residues: Chorismate synthase (364 aa).

NADP(+)-binding residues include R48 and R54. FMN contacts are provided by residues 125-127 (RSS), 238-239 (NA), G278, 293-297 (KPTSS), and R319.

The protein belongs to the chorismate synthase family. As to quaternary structure, homotetramer. The cofactor is FMNH2.

It carries out the reaction 5-O-(1-carboxyvinyl)-3-phosphoshikimate = chorismate + phosphate. It functions in the pathway metabolic intermediate biosynthesis; chorismate biosynthesis; chorismate from D-erythrose 4-phosphate and phosphoenolpyruvate: step 7/7. Its function is as follows. Catalyzes the anti-1,4-elimination of the C-3 phosphate and the C-6 proR hydrogen from 5-enolpyruvylshikimate-3-phosphate (EPSP) to yield chorismate, which is the branch point compound that serves as the starting substrate for the three terminal pathways of aromatic amino acid biosynthesis. This reaction introduces a second double bond into the aromatic ring system. This is Chorismate synthase from Shewanella loihica (strain ATCC BAA-1088 / PV-4).